A 120-amino-acid chain; its full sequence is NAD(P)H-quinone oxidoreductase subunit 3, chloroplastic (120 aa).

The next 3 helical transmembrane spans lie at 9 to 29 (IFWA…LISG), 64 to 84 (MFAL…PWAM), and 88 to 108 (VLGV…IVGL).

This sequence belongs to the complex I subunit 3 family. As to quaternary structure, NDH is composed of at least 16 different subunits, 5 of which are encoded in the nucleus.

Its subcellular location is the plastid. It is found in the chloroplast thylakoid membrane. The enzyme catalyses a plastoquinone + NADH + (n+1) H(+)(in) = a plastoquinol + NAD(+) + n H(+)(out). It carries out the reaction a plastoquinone + NADPH + (n+1) H(+)(in) = a plastoquinol + NADP(+) + n H(+)(out). Its function is as follows. NDH shuttles electrons from NAD(P)H:plastoquinone, via FMN and iron-sulfur (Fe-S) centers, to quinones in the photosynthetic chain and possibly in a chloroplast respiratory chain. The immediate electron acceptor for the enzyme in this species is believed to be plastoquinone. Couples the redox reaction to proton translocation, and thus conserves the redox energy in a proton gradient. The chain is NAD(P)H-quinone oxidoreductase subunit 3, chloroplastic from Lupinus luteus (European yellow lupine).